We begin with the raw amino-acid sequence, 419 residues long: Tubby-like protein 4 (419 aa).

The tract at residues 1 to 96 is disordered; that stretch reads MAATKREPLR…EREEEEEGSS (96 aa). Basic and acidic residues predominate over residues 33–57; sequence AKEKEKENEVPTEIGRGKDGGEKKP.

Belongs to the TUB family.

The sequence is that of Tubby-like protein 4 (TULP4) from Oryza sativa subsp. japonica (Rice).